The sequence spans 1573 residues: Pentafunctional AROM polypeptide (1573 aa).

The 3-dehydroquinate synthase stretch occupies residues 1–384 (MSNESNIITV…YEKHATVVSD (384 aa)). NAD(+) is bound by residues 46 to 48 (DSN), 83 to 86 (ESSK), 114 to 116 (GGV), and aspartate 119. 7-phospho-2-dehydro-3-deoxy-D-arabino-heptonate is bound at residue arginine 130. 139–140 (TT) is an NAD(+) binding site. 2 residues coordinate 7-phospho-2-dehydro-3-deoxy-D-arabino-heptonate: aspartate 146 and lysine 152. Lysine 161 is a binding site for NAD(+). Asparagine 162 serves as a coordination point for 7-phospho-2-dehydro-3-deoxy-D-arabino-heptonate. NAD(+)-binding positions include 179-182 (FLHT) and asparagine 190. Residue glutamate 194 participates in Zn(2+) binding. 7-phospho-2-dehydro-3-deoxy-D-arabino-heptonate is bound by residues 194-197 (EIIK) and lysine 250. Glutamate 260 serves as the catalytic Proton acceptor; for 3-dehydroquinate synthase activity. 7-phospho-2-dehydro-3-deoxy-D-arabino-heptonate is bound by residues 264-268 (RNLLN) and histidine 271. Histidine 271 contacts Zn(2+). The active-site Proton acceptor; for 3-dehydroquinate synthase activity is histidine 275. Residues histidine 287 and lysine 356 each coordinate 7-phospho-2-dehydro-3-deoxy-D-arabino-heptonate. Histidine 287 contributes to the Zn(2+) binding site. Residues 397 to 843 (VDEFTKSSWD…WDVLHQSFGV (447 aa)) are EPSP synthase. The active-site For EPSP synthase activity is the cysteine 825. The tract at residues 863-1058 (NASIILIGMR…KTKKRSTFLT (196 aa)) is shikimate kinase. 870–877 (GMRGAGKT) is a binding site for ATP. Residues 1059–1280 (LNYPRIEDAL…AAPGQLTVKQ (222 aa)) are 3-dehydroquinase. The active-site Proton acceptor; for 3-dehydroquinate dehydratase activity is histidine 1182. Lysine 1211 (schiff-base intermediate with substrate; for 3-dehydroquinate dehydratase activity) is an active-site residue. A shikimate dehydrogenase region spans residues 1293–1573 (PEKFFLFGKP…FDAVYQKVIE (281 aa)).

It in the N-terminal section; belongs to the sugar phosphate cyclases superfamily. Dehydroquinate synthase family. This sequence in the 2nd section; belongs to the EPSP synthase family. The protein in the 3rd section; belongs to the shikimate kinase family. In the 4th section; belongs to the type-I 3-dehydroquinase family. It in the C-terminal section; belongs to the shikimate dehydrogenase family. In terms of assembly, homodimer. Zn(2+) serves as cofactor.

It is found in the cytoplasm. It carries out the reaction 7-phospho-2-dehydro-3-deoxy-D-arabino-heptonate = 3-dehydroquinate + phosphate. It catalyses the reaction 3-dehydroquinate = 3-dehydroshikimate + H2O. The enzyme catalyses shikimate + NADP(+) = 3-dehydroshikimate + NADPH + H(+). The catalysed reaction is shikimate + ATP = 3-phosphoshikimate + ADP + H(+). It carries out the reaction 3-phosphoshikimate + phosphoenolpyruvate = 5-O-(1-carboxyvinyl)-3-phosphoshikimate + phosphate. Its pathway is metabolic intermediate biosynthesis; chorismate biosynthesis; chorismate from D-erythrose 4-phosphate and phosphoenolpyruvate: step 2/7. The protein operates within metabolic intermediate biosynthesis; chorismate biosynthesis; chorismate from D-erythrose 4-phosphate and phosphoenolpyruvate: step 3/7. It participates in metabolic intermediate biosynthesis; chorismate biosynthesis; chorismate from D-erythrose 4-phosphate and phosphoenolpyruvate: step 4/7. It functions in the pathway metabolic intermediate biosynthesis; chorismate biosynthesis; chorismate from D-erythrose 4-phosphate and phosphoenolpyruvate: step 5/7. Its pathway is metabolic intermediate biosynthesis; chorismate biosynthesis; chorismate from D-erythrose 4-phosphate and phosphoenolpyruvate: step 6/7. The AROM polypeptide catalyzes 5 consecutive enzymatic reactions in prechorismate polyaromatic amino acid biosynthesis. This Schizosaccharomyces pombe (strain 972 / ATCC 24843) (Fission yeast) protein is Pentafunctional AROM polypeptide.